A 67-amino-acid chain; its full sequence is Conotoxin Pu5.1 (67 aa).

Residues 1–22 form the signal peptide; sequence MRCVPVFVILLLLIASTPSVDA. Positions 23–51 are excised as a propeptide; it reads RPNPKDDVPLASFHEDANGILQMLWKKGR. Trp-63 bears the Tryptophan amide mark.

This sequence belongs to the conotoxin T superfamily. Post-translationally, contains 2 disulfide bonds that can be either 'C1-C3, C2-C4' or 'C1-C4, C2-C3', since these disulfide connectivities have been observed for conotoxins with cysteine framework V (for examples, see AC P0DQQ7 and AC P81755). In terms of tissue distribution, expressed by the venom duct.

It is found in the secreted. This chain is Conotoxin Pu5.1, found in Conus pulicarius (Flea-bitten cone).